A 565-amino-acid polypeptide reads, in one-letter code: Cytokinin dehydrogenase 2 (565 aa).

The first 20 residues, 1–20 (MKQEQVRMAVLLMLNCFVKA), serve as a signal peptide directing secretion. N64 carries N-linked (GlcNAc...) asparagine glycosylation. Residues 74 to 255 (RLAAAAAVLY…TRARIPLAPA (182 aa)) form the FAD-binding PCMH-type domain. FAD is bound by residues A108, G110, and G112. H113 carries the pros-8alpha-FAD histidine modification. Residues S114, Q118, D179, T184, S190, I194, and I245 each coordinate FAD. N464 carries an N-linked (GlcNAc...) asparagine glycan. The FAD site is built by Y517, S554, and Q557.

Belongs to the oxygen-dependent FAD-linked oxidoreductase family. Monomer. FAD is required as a cofactor. In terms of processing, glycosylated. In terms of tissue distribution, mostly expressed in leaves, culms, inflorescence meristems, and flowers, especially in vascular tissues.

The protein localises to the secreted. The protein resides in the extracellular space. The catalysed reaction is N(6)-dimethylallyladenine + A + H2O = 3-methyl-2-butenal + adenine + AH2. Functionally, catalyzes the oxidation of cytokinins, a family of N(6)-substituted adenine derivatives that are plant hormones, where the substituent is an isopentenyl group. Is a major QTL involved in grain yield. Modulates the number of reproductive organs by regulating the cytokinin accumulation in inflorescence meristems. Acts as negative regulator of panicle branching. This Oryza sativa subsp. japonica (Rice) protein is Cytokinin dehydrogenase 2.